The chain runs to 389 residues: UDP-D-apiose/UDP-D-xylose synthase 2 (389 aa).

Residues Phe-28, Ile-29, Asp-49, Asn-76, Ile-77, and Leu-96 each contribute to the NAD(+) site. Residues Tyr-105, Thr-139, Glu-141, Arg-182, and Tyr-185 each coordinate UDP-alpha-D-glucuronate. Tyr-185 and Lys-189 together coordinate NAD(+). The active-site Proton acceptor is Tyr-185. A UDP-alpha-D-glucuronate-binding site is contributed by Asn-214. NAD(+) contacts are provided by Trp-215 and Arg-235. Lys-251, Val-253, Arg-260, Tyr-331, Tyr-335, Asp-337, and Arg-341 together coordinate UDP-alpha-D-glucuronate.

It belongs to the NAD(P)-dependent epimerase/dehydratase family. As to quaternary structure, homodimer and heterodimer with AXS1. It depends on NAD(+) as a cofactor. As to expression, widely expressed with stronger expression in dark-grown seedlings, leaves and stems, and lower levels in flowers, siliques, pistils, pollen and roots.

It localises to the cytoplasm. The enzyme catalyses UDP-alpha-D-glucuronate + H(+) = UDP-alpha-D-xylose + CO2. It carries out the reaction UDP-alpha-D-glucuronate + H(+) = UDP-alpha-D-apiose + CO2. Functionally, together with AXS1, catalyzes the conversion of UDP-D-glucuronate into a mixture of UDP-D-apiose (UDP-Api) as the main product and UDP-D-xylose to a lesser extent, via a cycle of oxidation and reduction. D-Apiose (3-C-hydroxymethyl-d-erythrose) is the only plant cell wall monosaccharide with a branched carbon skeleton and is found in rhamnogalacturonan II (RG-II), apiogalacturonan, and several apioglycosides. This chain is UDP-D-apiose/UDP-D-xylose synthase 2, found in Arabidopsis thaliana (Mouse-ear cress).